We begin with the raw amino-acid sequence, 138 residues long: Probable non-specific lipid-transfer protein 1 (138 aa).

Positions 1–36 (MRTVSARSSVALVVIVAAVLVWTSSASVAPAPAPGS) are cleaved as a signal peptide. 4 cysteine pairs are disulfide-bonded: Cys-40–Cys-88, Cys-50–Cys-65, Cys-66–Cys-111, and Cys-86–Cys-127.

The protein belongs to the plant LTP family.

Its function is as follows. Plant non-specific lipid-transfer proteins transfer phospholipids as well as galactolipids across membranes. May play a role in wax or cutin deposition in the cell walls of expanding epidermal cells and certain secretory tissues. This chain is Probable non-specific lipid-transfer protein 1, found in Parietaria judaica (Pellitory-of-the-wall).